Here is a 431-residue protein sequence, read N- to C-terminus: Serine hydroxymethyltransferase 1 (431 aa).

Residues Leu-127 and 131–133 (GHL) each bind (6S)-5,6,7,8-tetrahydrofolate. The residue at position 236 (Lys-236) is an N6-(pyridoxal phosphate)lysine. Residue Glu-252 coordinates (6S)-5,6,7,8-tetrahydrofolate.

It belongs to the SHMT family. In terms of assembly, homodimer. The cofactor is pyridoxal 5'-phosphate.

Its subcellular location is the cytoplasm. It carries out the reaction (6R)-5,10-methylene-5,6,7,8-tetrahydrofolate + glycine + H2O = (6S)-5,6,7,8-tetrahydrofolate + L-serine. Its pathway is one-carbon metabolism; tetrahydrofolate interconversion. It participates in amino-acid biosynthesis; glycine biosynthesis; glycine from L-serine: step 1/1. Its function is as follows. Catalyzes the reversible interconversion of serine and glycine with tetrahydrofolate (THF) serving as the one-carbon carrier. This reaction serves as the major source of one-carbon groups required for the biosynthesis of purines, thymidylate, methionine, and other important biomolecules. Also exhibits THF-independent aldolase activity toward beta-hydroxyamino acids, producing glycine and aldehydes, via a retro-aldol mechanism. The polypeptide is Serine hydroxymethyltransferase 1 (Rhizobium meliloti (strain 1021) (Ensifer meliloti)).